The following is a 30-amino-acid chain: Matrix Gla protein (30 aa).

Phosphoserine occurs at positions 2, 3, and 5.

The protein belongs to the osteocalcin/matrix Gla protein family. Requires vitamin K-dependent gamma-carboxylation for its function.

Its subcellular location is the secreted. In terms of biological role, associates with the organic matrix of calcified cartilage. In Prionace glauca (Blue shark), this protein is Matrix Gla protein (mgp).